Reading from the N-terminus, the 152-residue chain is Transcriptional repressor NrdR (152 aa).

A zinc finger spans residues 3–34 (CPKCGSLNDKVVDTRQSKDGTVIRRRRECLDC). The ATP-cone domain occupies 49-139 (IVVKKKNGTT…VYNEFQDIKD (91 aa)).

The protein belongs to the NrdR family. Requires Zn(2+) as cofactor.

Negatively regulates transcription of bacterial ribonucleotide reductase nrd genes and operons by binding to NrdR-boxes. The sequence is that of Transcriptional repressor NrdR from Persephonella marina (strain DSM 14350 / EX-H1).